The sequence spans 68 residues: ATP synthase F(0) complex subunit 8 (68 aa).

The chain crosses the membrane as a helical span at residues 8 to 24; that stretch reads VWPTMIAPMLLTLFLIT. Residue Lys54 is modified to N6-acetyllysine; alternate. Position 54 is an N6-succinyllysine; alternate (Lys54). Lys57 bears the N6-acetyllysine mark.

Belongs to the ATPase protein 8 family. In terms of assembly, component of the ATP synthase complex composed at least of ATP5F1A/subunit alpha, ATP5F1B/subunit beta, ATP5MC1/subunit c (homooctomer), MT-ATP6/subunit a, MT-ATP8/subunit 8, ATP5ME/subunit e, ATP5MF/subunit f, ATP5MG/subunit g, ATP5MK/subunit k, ATP5MJ/subunit j, ATP5F1C/subunit gamma, ATP5F1D/subunit delta, ATP5F1E/subunit epsilon, ATP5PF/subunit F6, ATP5PB/subunit b, ATP5PD/subunit d, ATP5PO/subunit OSCP. ATP synthase complex consists of a soluble F(1) head domain (subunits alpha(3) and beta(3)) - the catalytic core - and a membrane F(0) domain - the membrane proton channel (subunits c, a, 8, e, f, g, k and j). These two domains are linked by a central stalk (subunits gamma, delta, and epsilon) rotating inside the F1 region and a stationary peripheral stalk (subunits F6, b, d, and OSCP). Interacts with PRICKLE3.

The protein localises to the mitochondrion membrane. Functionally, subunit 8, of the mitochondrial membrane ATP synthase complex (F(1)F(0) ATP synthase or Complex V) that produces ATP from ADP in the presence of a proton gradient across the membrane which is generated by electron transport complexes of the respiratory chain. ATP synthase complex consist of a soluble F(1) head domain - the catalytic core - and a membrane F(1) domain - the membrane proton channel. These two domains are linked by a central stalk rotating inside the F(1) region and a stationary peripheral stalk. During catalysis, ATP synthesis in the catalytic domain of F(1) is coupled via a rotary mechanism of the central stalk subunits to proton translocation. In vivo, can only synthesize ATP although its ATP hydrolase activity can be activated artificially in vitro. Part of the complex F(0) domain. The chain is ATP synthase F(0) complex subunit 8 from Gorilla gorilla gorilla (Western lowland gorilla).